The sequence spans 602 residues: Arginine--tRNA ligase (602 aa).

A 'HIGH' region motif is present at residues 138–148 (ANPTGPMHVGH).

The protein belongs to the class-I aminoacyl-tRNA synthetase family. In terms of assembly, monomer.

Its subcellular location is the cytoplasm. It carries out the reaction tRNA(Arg) + L-arginine + ATP = L-arginyl-tRNA(Arg) + AMP + diphosphate. The polypeptide is Arginine--tRNA ligase (Gluconobacter oxydans (strain 621H) (Gluconobacter suboxydans)).